The sequence spans 250 residues: uncharacterized protein (250 aa).

Lys-17 is covalently cross-linked (Glycyl lysine isopeptide (Lys-Gly) (interchain with G-Cter in ubiquitin)). The tract at residues 30-67 (REEDYVATSKDNIHHHPCDWSAKPSQRQNENEQKSTIR) is disordered.

This is an uncharacterized protein from Saccharomyces cerevisiae (strain ATCC 204508 / S288c) (Baker's yeast).